Consider the following 394-residue polypeptide: Protein arginine N-methyltransferase 8 (394 aa).

The N-myristoyl glycine moiety is linked to residue Gly-2. The interval 16–40 is disordered; it reads MAENAAESTEVNSPPSQPPQPVVPA. 2 consecutive short sequence motifs (SH3-binding) follow at residues 29-42 and 53-58; these read PPSQ…PAKP and PSCPGR. Residues 30–39 are compositionally biased toward pro residues; that stretch reads PSQPPQPVVP. The residue at position 58 (Arg-58) is an Omega-N-methylarginine; by autocatalysis. The residue at position 73 (Arg-73) is an Asymmetric dimethylarginine; by autocatalysis. The SAM-dependent MTase PRMT-type domain occupies 73 to 394; sequence RDYYFDSYAH…TSVSNDYKMR (322 aa). S-adenosyl-L-methionine is bound by residues His-86, Arg-95, Gly-119, 119 to 122, Glu-141, and Glu-170; that span reads GSGT. Active-site residues include Glu-185 and Glu-194.

Belongs to the class I-like SAM-binding methyltransferase superfamily. Protein arginine N-methyltransferase family. PRMT8 subfamily. In terms of assembly, homodimer. Tetramer; individual homodimers associates to form a homotetramer. Homooctamer; individual homodimers associates to form a homooctamer and homooligomerization is required for proper localization to the cell membrane. Heterodimer with PRMT1; heterodimerization may recruit PRMT1 activity to the plasma membrane. Interacts with PRMT2 (via the SH3 domain). Interacts with FYN (via the SH3 domain). Interacts with EWS; independently of EWS methylation status. In terms of tissue distribution, brain-specific.

It localises to the cell membrane. It catalyses the reaction L-arginyl-[protein] + S-adenosyl-L-methionine = N(omega)-methyl-L-arginyl-[protein] + S-adenosyl-L-homocysteine + H(+). The catalysed reaction is L-arginyl-[protein] + 2 S-adenosyl-L-methionine = N(omega),N(omega)-dimethyl-L-arginyl-[protein] + 2 S-adenosyl-L-homocysteine + 2 H(+). Its function is as follows. S-adenosyl-L-methionine-dependent and membrane-associated arginine methyltransferase that can both catalyze the formation of omega-N monomethylarginine (MMA) and asymmetrical dimethylarginine (aDMA) in proteins such as NIFK, myelin basic protein, histone H4, H2A and H2A/H2B dimer. Able to mono- and dimethylate EWS protein; however its precise role toward EWS remains unclear as it still interacts with fully methylated EWS. This chain is Protein arginine N-methyltransferase 8, found in Homo sapiens (Human).